The sequence spans 327 residues: WRKY transcription factor WRKY76 (327 aa).

Positions 56–76 form a coiled coil; that stretch reads AKILEAKVTQMSEENRRLTEV. Positions 88–134 are disordered; sequence LGLDGSASPPRPVSPLSGKKRSRESMETANSCDANSNRHQGGDADHA. A Nuclear localization signal motif is present at residues 106 to 112; that stretch reads KKRSRES. The segment covering 114-126 has biased composition (polar residues); it reads ETANSCDANSNRH. The WRKY DNA-binding region spans 160-226; that stretch reads DTSLVVKDGY…YEGEHNHPHP (67 aa).

It belongs to the WRKY group II-a family.

It localises to the nucleus. Its function is as follows. Transcription repressor. Interacts specifically with the W box (5'-(T)TGAC[CT]-3'), a frequently occurring elicitor-responsive cis-acting element. Regulates, probably indirectly, the activation of defense-related genes during defense response. Modulates plant innate immunity against X.oryzae pv. oryzae (Xoo). This Oryza sativa subsp. indica (Rice) protein is WRKY transcription factor WRKY76.